The sequence spans 408 residues: Peptidase T (408 aa).

Zn(2+) is bound at residue His-78. The active site involves Asp-80. Residue Asp-141 participates in Zn(2+) binding. Glu-175 serves as the catalytic Proton acceptor. Zn(2+) contacts are provided by Glu-176, Asp-198, and His-380.

The protein belongs to the peptidase M20B family. Zn(2+) is required as a cofactor.

Its subcellular location is the cytoplasm. The enzyme catalyses Release of the N-terminal residue from a tripeptide.. Its function is as follows. Cleaves the N-terminal amino acid of tripeptides. This Halothermothrix orenii (strain H 168 / OCM 544 / DSM 9562) protein is Peptidase T.